The chain runs to 960 residues: Endoplasmic reticulum aminopeptidase 2 (960 aa).

Topologically, residues 1–20 are cytoplasmic; sequence MFHSSAMVNSHRKPMFNIHR. The chain crosses the membrane as a helical; Signal-anchor for type II membrane protein span at residues 21-40; sequence GFYCLTAILPQICICSQFSV. The Lumenal segment spans residues 41–960; that stretch reads PSSYHFTEDP…TLRTWLMVNT (920 aa). N-linked (GlcNAc...) asparagine glycans are attached at residues N85 and N119. E200 is a substrate binding site. A glycan (N-linked (GlcNAc...) asparagine) is linked at N219. 334–338 provides a ligand contact to substrate; it reads GAMEN. H370 is a Zn(2+) binding site. Residue E371 is the Proton acceptor of the active site. Residues H374 and E393 each contribute to the Zn(2+) site. N405 carries N-linked (GlcNAc...) asparagine glycosylation. A disulfide bridge connects residues C421 and C460. N-linked (GlcNAc...) asparagine glycosylation occurs at N650. A disulfide bridge connects residues C759 and C766.

The protein belongs to the peptidase M1 family. In terms of assembly, heterodimer with ERAP1. Zn(2+) serves as cofactor. Post-translationally, N-glycosylated. In terms of tissue distribution, ubiquitously expressed. Highly expressed in spleen and leukocytes.

The protein resides in the endoplasmic reticulum membrane. Aminopeptidase that plays a central role in peptide trimming, a step required for the generation of most HLA class I-binding peptides. Peptide trimming is essential to customize longer precursor peptides to fit them to the correct length required for presentation on MHC class I molecules. Preferentially hydrolyzes the basic residues Arg and Lys. In Homo sapiens (Human), this protein is Endoplasmic reticulum aminopeptidase 2 (ERAP2).